We begin with the raw amino-acid sequence, 103 residues long: Large ribosomal subunit protein bL21 (103 aa).

Belongs to the bacterial ribosomal protein bL21 family. In terms of assembly, part of the 50S ribosomal subunit. Contacts protein L20.

In terms of biological role, this protein binds to 23S rRNA in the presence of protein L20. This Ectopseudomonas mendocina (strain ymp) (Pseudomonas mendocina) protein is Large ribosomal subunit protein bL21.